Here is a 184-residue protein sequence, read N- to C-terminus: MANEQNEQSQDLSSEQTTQDHEQTQTEGVEQGAEISVEDLKAQIGKLEESLKLEKARTANAVYEAEKVKERAEREADTAKKFALEKFAKSLLDSVDNLERAIQAAGKEKTPLLEGVELTLKSLTTTLEKFDVVSVDTTNGFNAELHQAVGIDPNAKSGEIGNVLQKGYTLSGRLLRPAMVTVGQ.

A compositionally biased stretch (polar residues) spans 1-14 (MANEQNEQSQDLSS). The segment at 1–35 (MANEQNEQSQDLSSEQTTQDHEQTQTEGVEQGAEI) is disordered.

Belongs to the GrpE family. In terms of assembly, homodimer.

It is found in the cytoplasm. Its function is as follows. Participates actively in the response to hyperosmotic and heat shock by preventing the aggregation of stress-denatured proteins, in association with DnaK and GrpE. It is the nucleotide exchange factor for DnaK and may function as a thermosensor. Unfolded proteins bind initially to DnaJ; upon interaction with the DnaJ-bound protein, DnaK hydrolyzes its bound ATP, resulting in the formation of a stable complex. GrpE releases ADP from DnaK; ATP binding to DnaK triggers the release of the substrate protein, thus completing the reaction cycle. Several rounds of ATP-dependent interactions between DnaJ, DnaK and GrpE are required for fully efficient folding. In Acinetobacter baylyi (strain ATCC 33305 / BD413 / ADP1), this protein is Protein GrpE.